A 239-amino-acid polypeptide reads, in one-letter code: Orotidine 5'-phosphate decarboxylase (239 aa).

Substrate is bound by residues Asp-11, Lys-33, 60 to 69 (DLKCHDIPTT), Thr-123, Arg-185, Gln-194, Gly-214, and Arg-215. Lys-62 acts as the Proton donor in catalysis.

Belongs to the OMP decarboxylase family. Type 1 subfamily. Homodimer.

It catalyses the reaction orotidine 5'-phosphate + H(+) = UMP + CO2. Its pathway is pyrimidine metabolism; UMP biosynthesis via de novo pathway; UMP from orotate: step 2/2. Catalyzes the decarboxylation of orotidine 5'-monophosphate (OMP) to uridine 5'-monophosphate (UMP). This chain is Orotidine 5'-phosphate decarboxylase, found in Bacillus licheniformis (strain ATCC 14580 / DSM 13 / JCM 2505 / CCUG 7422 / NBRC 12200 / NCIMB 9375 / NCTC 10341 / NRRL NRS-1264 / Gibson 46).